Consider the following 591-residue polypeptide: Aspartate--tRNA(Asp/Asn) ligase (591 aa).

E176 contacts L-aspartate. The segment at 200–203 (QLFK) is aspartate. R222 serves as a coordination point for L-aspartate. Residues 222-224 (RDE) and Q231 contribute to the ATP site. H450 contributes to the L-aspartate binding site. E484 contacts ATP. Residue R491 coordinates L-aspartate. 536–539 (GLDR) lines the ATP pocket.

It belongs to the class-II aminoacyl-tRNA synthetase family. Type 1 subfamily. As to quaternary structure, homodimer.

The protein localises to the cytoplasm. It carries out the reaction tRNA(Asx) + L-aspartate + ATP = L-aspartyl-tRNA(Asx) + AMP + diphosphate. Its function is as follows. Aspartyl-tRNA synthetase with relaxed tRNA specificity since it is able to aspartylate not only its cognate tRNA(Asp) but also tRNA(Asn). Reaction proceeds in two steps: L-aspartate is first activated by ATP to form Asp-AMP and then transferred to the acceptor end of tRNA(Asp/Asn). This Bacillus cereus (strain ATCC 10987 / NRS 248) protein is Aspartate--tRNA(Asp/Asn) ligase.